A 328-amino-acid chain; its full sequence is Dof zinc finger protein PBF (328 aa).

A disordered region spans residues 33 to 56; the sequence is RDPKQTRAMPQIGGSGERKPRPQL. A Dof-type zinc finger spans residues 60–114; it reads LKCPRCDSNNTKFCYYNNYSMSQPRYFCKACRRYWTHGGTLRNVPIGGGCRKNKH. Cys62, Cys65, Cys87, and Cys90 together coordinate Zn(2+). 2 disordered regions span residues 124–144 and 306–328; these read TSSS…ASSS and WNKH…NKGQ.

As to quaternary structure, interacts with the bZIP transcription factor Opaque-2/O2. Seed endosperm.

The protein localises to the nucleus. Its function is as follows. Transcription factor that binds specifically to a 5'-AA[AG]G-3' consensus core sequence. May enhance the DNA binding of the bZIP transcription factor Opaque-2 to O2 binding site elements. This chain is Dof zinc finger protein PBF (PBF), found in Zea mays (Maize).